A 185-amino-acid chain; its full sequence is MILVDWQITDRIERGYIGIDPYNPELIQPNSIDIRLGNHFVWYTPGDEIIDPYIRDTVTGGTEEMTAESIVLHPGQFVLAETMEAIRLPDNIVASIEGKSSIARLGIELHQTGGWIDAGFAGSITLEMCNVNQRPVRMHAGMPIGQLVFYTTERALCPYNAKKDAKYLNQRQATLSRYYENKKRA.

DCTP-binding positions include 99–104 (KSSIAR), Asp117, 125–127 (TLE), Gln146, Tyr159, Lys166, and Gln170. Residue Glu127 is the Proton donor/acceptor of the active site.

It belongs to the dCTP deaminase family. Homotrimer.

The catalysed reaction is dCTP + 2 H2O = dUMP + NH4(+) + diphosphate. It functions in the pathway pyrimidine metabolism; dUMP biosynthesis; dUMP from dCTP: step 1/1. Bifunctional enzyme that catalyzes both the deamination of dCTP to dUTP and the hydrolysis of dUTP to dUMP without releasing the toxic dUTP intermediate. This Methanospirillum hungatei JF-1 (strain ATCC 27890 / DSM 864 / NBRC 100397 / JF-1) protein is dCTP deaminase, dUMP-forming.